We begin with the raw amino-acid sequence, 251 residues long: 2,3-bisphosphoglycerate-dependent phosphoglycerate mutase (251 aa).

Substrate is bound by residues 13 to 20 (RHGESEWN), 26 to 27 (TG), Arg-65, 92 to 95 (ERHY), Lys-103, 119 to 120 (RR), and 186 to 187 (GN). His-14 functions as the Tele-phosphohistidine intermediate in the catalytic mechanism. Glu-92 serves as the catalytic Proton donor/acceptor.

The protein belongs to the phosphoglycerate mutase family. BPG-dependent PGAM subfamily.

The catalysed reaction is (2R)-2-phosphoglycerate = (2R)-3-phosphoglycerate. The protein operates within carbohydrate degradation; glycolysis; pyruvate from D-glyceraldehyde 3-phosphate: step 3/5. Its function is as follows. Catalyzes the interconversion of 2-phosphoglycerate and 3-phosphoglycerate. The sequence is that of 2,3-bisphosphoglycerate-dependent phosphoglycerate mutase from Rhodococcus opacus (strain B4).